The sequence spans 258 residues: Ribosomal protein L11 methyltransferase (258 aa).

Residues Thr-117, Gly-138, Asp-160, and Asn-201 each coordinate S-adenosyl-L-methionine.

The protein belongs to the methyltransferase superfamily. PrmA family.

It is found in the cytoplasm. It carries out the reaction L-lysyl-[protein] + 3 S-adenosyl-L-methionine = N(6),N(6),N(6)-trimethyl-L-lysyl-[protein] + 3 S-adenosyl-L-homocysteine + 3 H(+). In terms of biological role, methylates ribosomal protein L11. The protein is Ribosomal protein L11 methyltransferase of Thermosipho melanesiensis (strain DSM 12029 / CIP 104789 / BI429).